Reading from the N-terminus, the 361-residue chain is FK506-binding protein 39 kDa (361 aa).

Residues 122-256 (LVDEEDEEEE…PSSPKTRTLK (135 aa)) are disordered. The segment covering 123 to 174 (VDEEDEEEEESDEDYDLSPTEEDLVETVSGDEESEEESESEDNSASEEDELD) has biased composition (acidic residues). Residue Ser-192 is modified to Phosphoserine. Basic and acidic residues predominate over residues 208–227 (QKVEGTPVKEKKVAFAEKLE). Thr-213 carries the phosphothreonine modification. Over residues 241–252 (QASSNAPSSPKT) the composition is skewed to polar residues. At Ser-249 the chain carries Phosphoserine. Residues 275–361 (GKKVEMRYIG…VFEVKLVRVH (87 aa)) enclose the PPIase FKBP-type domain.

Belongs to the FKBP-type PPIase family. FKBP3/4 subfamily.

Its subcellular location is the nucleus. The protein resides in the nucleolus. The enzyme catalyses [protein]-peptidylproline (omega=180) = [protein]-peptidylproline (omega=0). Functionally, PPIase that acts as a histone chaperone. Histone proline isomerase that increases the rate of cis-trans isomerization at prolines on the histone H3 N-terminal tail. Proline isomerization influences H3 methylation thereby regulating gene expression. In Schizosaccharomyces pombe (strain 972 / ATCC 24843) (Fission yeast), this protein is FK506-binding protein 39 kDa.